A 230-amino-acid polypeptide reads, in one-letter code: Claudin-2 (230 aa).

The Cytoplasmic portion of the chain corresponds to 1–7 (MASLGVQ). A helical membrane pass occupies residues 8–28 (LVGYILGLLGLLGTSIAMLLP). Over 29–81 (NWRTSSYVGASIVTAVGFSKGLWMECATHSTGITQCDIYSTLLGLPADIQAAQ) the chain is Extracellular. An intrachain disulfide couples Cys54 to Cys64. Residues 82–102 (AMMVTSSAMSSLACIISVVGM) form a helical membrane-spanning segment. Over 103 to 116 (RCTVFCQDSRAKDR) the chain is Cytoplasmic. Residues 117–137 (VAVVGGVFFILGGILGFIPVA) form a helical membrane-spanning segment. The Extracellular portion of the chain corresponds to 138-162 (WNLHGILRDFYSPLVPDSMKFEIGE). Residues 163–183 (ALYLGIISALFSLVAGVILCF) form a helical membrane-spanning segment. At 184–230 (SCSPQGNRTNYYDGYQAQPLATRSSPRSAQQPKAKSEFNSYSLTGYV) the chain is on the cytoplasmic side. The segment at 205-230 (TRSSPRSAQQPKAKSEFNSYSLTGYV) is disordered. Residue Lys218 forms a Glycyl lysine isopeptide (Lys-Gly) (interchain with G-Cter in SUMO) linkage. Phosphoserine is present on residues Ser219 and Ser223. An interactions with TJP1, TJP2 and TJP3 region spans residues 229–230 (YV).

This sequence belongs to the claudin family. In terms of assembly, can form homo- and heteropolymers with other claudins to mediate paracellular barrier and channel functions of tight junctions in response to physiological stimuli. Homopolymers interact with CLDN3, but not CLDN1, homopolymers. Directly interacts with TJP1/ZO-1, TJP2/ZO-2 and TJP3/ZO-3. In terms of processing, the disulfide bond is necessary for pore formation, but is not required for correct protein trafficking. Expressed in the kidney, liver and intestine, with higher levels in the ileum than in the jejunum. Low levels in the brain. Expressed in colonic epithelium (at protein level). Expressed in the perivenous regions, bile ducts, and gallbladder epithelium (at protein level).

The protein resides in the cell junction. Its subcellular location is the tight junction. The protein localises to the cell membrane. The catalysed reaction is Na(+)(in) = Na(+)(out). The enzyme catalyses K(+)(in) = K(+)(out). It carries out the reaction Rb(+)(in) = Rb(+)(out). It catalyses the reaction Li(+)(in) = Li(+)(out). The catalysed reaction is Cs(+)(in) = Cs(+)(out). The enzyme catalyses Ca(2+)(in) = Ca(2+)(out). It carries out the reaction methylamine(out) = methylamine(in). It catalyses the reaction choline(out) = choline(in). The catalysed reaction is H2O(in) = H2O(out). Its activity is regulated as follows. The channel permeability is down-regulated at acidic pH. Functionally, forms paracellular channels: polymerizes in tight junction strands with cation- and water-selective channels through the strands, conveying epithelial permeability in a process known as paracellular tight junction permeability. In intestinal epithelium, allows for sodium and water fluxes from the peritoneal side to the lumen of the intestine to regulate nutrient absorption and clear enteric pathogens as part of mucosal immune response. In kidney, allows passive sodium and calcium reabsorption across proximal tubules from the lumen back to the bloodstream. In the hepatobiliary tract, allows paracellular water and cation fluxes in the hepatic perivenous areas and biliary epithelium to generate bile flow and maintain osmotic gradients. This chain is Claudin-2, found in Mus musculus (Mouse).